Reading from the N-terminus, the 317-residue chain is Acetyl-coenzyme A carboxylase carboxyl transferase subunit alpha (317 aa).

In terms of domain architecture, CoA carboxyltransferase C-terminal spans 37 to 292 (QISQKLEDTK…EEYILKAFNE (256 aa)).

It belongs to the AccA family. Acetyl-CoA carboxylase is a heterohexamer composed of biotin carboxyl carrier protein (AccB), biotin carboxylase (AccC) and two subunits each of ACCase subunit alpha (AccA) and ACCase subunit beta (AccD).

Its subcellular location is the cytoplasm. It catalyses the reaction N(6)-carboxybiotinyl-L-lysyl-[protein] + acetyl-CoA = N(6)-biotinyl-L-lysyl-[protein] + malonyl-CoA. It participates in lipid metabolism; malonyl-CoA biosynthesis; malonyl-CoA from acetyl-CoA: step 1/1. In terms of biological role, component of the acetyl coenzyme A carboxylase (ACC) complex. First, biotin carboxylase catalyzes the carboxylation of biotin on its carrier protein (BCCP) and then the CO(2) group is transferred by the carboxyltransferase to acetyl-CoA to form malonyl-CoA. This Flavobacterium psychrophilum (strain ATCC 49511 / DSM 21280 / CIP 103535 / JIP02/86) protein is Acetyl-coenzyme A carboxylase carboxyl transferase subunit alpha.